The primary structure comprises 186 residues: Quinone reductase (186 aa).

FMN-binding positions include 13 to 20, 80 to 83, and S116; these read SLRKESYN and EYNR.

This sequence belongs to the SsuE family. Homotetramer. Dimer of dimers. The tetrameric configuration has a central role in chromate reductase activity. The cofactor is FMN.

It catalyses the reaction a quinone + NADH + H(+) = a quinol + NAD(+). The enzyme catalyses a quinone + NADPH + H(+) = a quinol + NADP(+). It carries out the reaction Cr(6+) + 2 NADH + O2 = Cr(3+) + superoxide + 2 NAD(+) + 2 H(+). The catalysed reaction is Cr(6+) + 2 NADPH + O2 = Cr(3+) + superoxide + 2 NADP(+) + 2 H(+). With respect to regulation, may be inhibited by divalent cations. Its function is as follows. Catalyzes the reduction of quinones. Acts by simultaneous two-electron transfer, avoiding formation of highly reactive semiquinone intermediates and producing quinols that promote tolerance of H(2)O(2). Quinone reduction is probably the primary biological role of ChrR. Can also reduce toxic chromate to insoluble and less toxic Cr(3+). Catalyzes the transfer of three electrons to Cr(6+) producing Cr(3+) and one electron to molecular oxygen. This reaction produces transiently a minimal amount of the toxic Cr(5+) species and reactive oxygen species (ROS). Chromate reduction protects the cell against chromate toxicity, but is likely a secondary activity. Can also reduce potassium ferricyanide and 2,6-dichloroindophenol. During chromate reduction, displays an eightfold preference for NADH over NADPH. The protein is Quinone reductase of Pseudomonas putida (strain ATCC 47054 / DSM 6125 / CFBP 8728 / NCIMB 11950 / KT2440).